The primary structure comprises 285 residues: MDSNNSNNNNKNLKQICDIPKPQFLSKGVFTLVGVLCKFWISMNTVTTSGIDKLVNEIDKTHQLKRPMITIANHSSNLDDPLLWGVLPNRILMDPSKQRWTLGASNILFTNWFYSKFFSLGKCIKIVRGDGIYQDGMNESIDRLSEGQWLHIFPEGRISQQTQLLYFKWGLGRLVGECYRRTGVVPLVVPIYHQGMEKSMPLAKLPIPRVGINLDIKVGDNIYCDQVISKYIDDNKISDLTDYLSQDDKKRKDFYKTITLHIEDEYQKIIPPTNRGRFSHPTIKD.

The Mitochondrial intermembrane portion of the chain corresponds to 1 to 23 (MDSNNSNNNNKNLKQICDIPKPQ). Residues 24-42 (FLSKGVFTLVGVLCKFWIS) lie within the membrane without spanning it. At 43 to 285 (MNTVTTSGID…GRFSHPTIKD (243 aa)) the chain is on the mitochondrial intermembrane side. Positions 74–79 (HSSNLD) match the HXXXXD motif motif.

Belongs to the taffazin family.

It is found in the mitochondrion outer membrane. Its subcellular location is the mitochondrion inner membrane. The enzyme catalyses a 1-acyl-sn-glycero-3-phosphate + a 1,2-diacyl-sn-glycero-3-phospho-(1'-sn-glycerol) = 1-acyl-sn-glycero-3-phospho-(1'-sn-glycerol) + a 1,2-diacyl-sn-glycero-3-phosphate. It carries out the reaction 1-hexadecanoyl-2-(9Z,12Z-octadecadienoyl)-sn-glycero-3-phospho-(1'-sn-glycerol) + 1-(9Z-octadecenoyl)-sn-glycero-3-phosphate = 1-(9Z)-octadecenoyl-2-(9Z,12Z)-octadecadienoyl-sn-glycero-3-phosphate + 1-hexadecanoyl-sn-glycero-3-phospho-(1'-sn-glycerol). It catalyses the reaction 1'-[1,2-diacyl-sn-glycero-3-phospho],3'-[1-acyl-sn-glycero-3-phospho]-glycerol + a 1,2-diacyl-sn-glycero-3-phosphocholine = a cardiolipin + a 1-acyl-sn-glycero-3-phosphocholine. The catalysed reaction is 1-hexadecanoyl-2-(9Z,12Z-octadecadienoyl)-sn-glycero-3-phosphocholine + 1-hexadecanoyl-sn-glycero-3-phosphocholine = 2-(9Z,12Z-octadecadienoyl)-sn-glycero-3-phosphocholine + 1,2-dihexadecanoyl-sn-glycero-3-phosphocholine. The enzyme catalyses 1,2-di-(9Z-octadecenoyl)-sn-glycero-3-phosphocholine + 1-hexadecanoyl-sn-glycero-3-phosphocholine = 1-hexadecanoyl-2-(9Z-octadecenoyl)-sn-glycero-3-phosphocholine + 1-(9Z-octadecenoyl)-sn-glycero-3-phosphocholine. It participates in phospholipid metabolism. Functionally, acyltransferase required to remodel newly synthesized phospholipid cardiolipin (1',3'-bis-[1,2-diacyl-sn-glycero-3-phospho]-glycerol or CL), a key component of the mitochondrial inner membrane, with tissue specific acyl chains necessary for adequate mitochondrial function. Its role in cellular physiology is to improve mitochondrial performance. CL is critical for the coassembly of lipids and proteins in mitochondrial membranes, for instance, remodeling of the acyl groups of CL in the mitochondrial inner membrane affects the assembly and stability of respiratory chain complex IV and its supercomplex forms. Catalyzes the transacylation between phospholipids and lysophospholipids, with the highest rate being between phosphatidylcholine (1,2-diacyl-sn-glycero-3-phosphocholine or PC) and CL. Catalyzes both 1-acyl-sn-glycero-3-phosphocholine (lysophosphatidylcholine or LPC) reacylation and PC-CL transacylation, that means, it exchanges acyl groups between CL and PC by a combination of forward and reverse transacylations. Also catalyzes transacylations between other phospholipids such as phosphatidylethanolamine (1,2-diacyl-sn-glycero-3-phosphoethanolamine or PE) and CL, between PC and PE, and between PC and phosphatidate (1,2-diacyl-sn-glycero-3-phosphate or PA), although at lower rate. Not regiospecific, it transfers acyl groups into any of the sn-1 and sn-2 positions of the monolysocardiolipin (MLCL), which is an important prerequisite for uniformity and symmetry in CL acyl distribution. Cannot transacylate dilysocardiolipin (DLCL), thus, the role of MLCL is limited to that of an acyl acceptor. CoA-independent, it can reshuffle molecular species within a single phospholipid class. Redistributes fatty acids between MLCL, CL, and other lipids, which prolongs the half-life of CL. Its action is completely reversible, which allows for cyclic changes, such as fission and fusion or bending and flattening of the membrane. Hence, by contributing to the flexibility of the lipid composition, it plays an important role in the dynamics of mitochondria membranes. This Dictyostelium discoideum (Social amoeba) protein is Taffazin (taz).